Here is a 189-residue protein sequence, read N- to C-terminus: Peptidyl-tRNA hydrolase (189 aa).

Residue Y15 coordinates tRNA. H20 functions as the Proton acceptor in the catalytic mechanism. The tRNA site is built by F66, N68, and N114.

Belongs to the PTH family. Monomer.

The protein localises to the cytoplasm. It catalyses the reaction an N-acyl-L-alpha-aminoacyl-tRNA + H2O = an N-acyl-L-amino acid + a tRNA + H(+). Its function is as follows. Hydrolyzes ribosome-free peptidyl-tRNAs (with 1 or more amino acids incorporated), which drop off the ribosome during protein synthesis, or as a result of ribosome stalling. Catalyzes the release of premature peptidyl moieties from peptidyl-tRNA molecules trapped in stalled 50S ribosomal subunits, and thus maintains levels of free tRNAs and 50S ribosomes. The protein is Peptidyl-tRNA hydrolase of Streptococcus thermophilus (strain CNRZ 1066).